Here is a 234-residue protein sequence, read N- to C-terminus: Redox-sensing transcriptional repressor Rex (234 aa).

A DNA-binding region (H-T-H motif) is located at residues 17-56 (TYIRVLEELEAQNVLRASSGELARRAGVTPFQVRKDLTYF). 91 to 96 (GMGRLG) contacts NAD(+).

Belongs to the transcriptional regulatory Rex family. In terms of assembly, homodimer.

It is found in the cytoplasm. Modulates transcription in response to changes in cellular NADH/NAD(+) redox state. In Deinococcus radiodurans (strain ATCC 13939 / DSM 20539 / JCM 16871 / CCUG 27074 / LMG 4051 / NBRC 15346 / NCIMB 9279 / VKM B-1422 / R1), this protein is Redox-sensing transcriptional repressor Rex.